We begin with the raw amino-acid sequence, 736 residues long: Prospero homeobox protein 1 (736 aa).

The segment covering 103-135 has biased composition (polar residues); sequence KNGGTEPSFQASGLSSTGSEVHQEDVCSNSSRD. The segment at 103-146 is disordered; the sequence is KNGGTEPSFQASGLSSTGSEVHQEDVCSNSSRDSPQECLSPFGR. A Nuclear localization signal motif is present at residues 163–168; the sequence is RAKRAR. Disordered stretches follow at residues 180-220, 261-301, 319-344, 445-465, and 499-518; these read PRVA…QQQS, YDST…EMCE, EIGENKPKREGPKEKDQGPNSFHPEG, NSSDQPASAPPAGGHHASLHQ, and PSASFPGKERASPESLDLTR. Residues 264 to 274 are compositionally biased toward acidic residues; sequence TDSENDEDGNL. Basic and acidic residues predominate over residues 319–335; it reads EIGENKPKREGPKEKDQ. Positions 450 to 460 are enriched in low complexity; the sequence is PASAPPAGGHH. Positions 505-518 are enriched in basic and acidic residues; it reads GKERASPESLDLTR. Residues 576–634 form the Prospero-type homeo domain; the sequence is QEGLSPNHLKKAKLMFFYTRYPSSNMLKTYFSDVKFNRCITSQLIKWFSNFREFYYIQM. The segment at 576-734 is homeo-Prospero; it reads QEGLSPNHLK…KSPNCLQELL (159 aa). The Prospero domain maps to 635–734; sequence EKYARQAIND…KSPNCLQELL (100 aa).

Belongs to the Prospero homeodomain family. As to expression, expressed most actively in the developing lens and midgut and at lower levels in the developing brain, heart, muscle and retina.

The protein resides in the nucleus. In terms of biological role, transcription factor which may be involved in developmental processes such as cell fate determination, gene transcriptional regulation and progenitor cell regulation in a number of organs. May be essential in the development and function of the eye. May play a role in the regulation of the circadian rhythm by repressing the expression of clock genes. This chain is Prospero homeobox protein 1 (PROX1), found in Gallus gallus (Chicken).